A 135-amino-acid chain; its full sequence is Large ribosomal subunit protein eL32 (135 aa).

The protein belongs to the eukaryotic ribosomal protein eL32 family.

In Methanococcus vannielii, this protein is Large ribosomal subunit protein eL32 (rpl32e).